Consider the following 278-residue polypeptide: UPF0761 membrane protein NT05HA_1801 (278 aa).

Helical transmembrane passes span 32 to 52 (MLAI…FPVF), 88 to 108 (QMSA…INSI), 123 to 143 (PIFT…LLVG), 168 to 188 (LLSF…YMVV), 203 to 223 (LIAA…IVTF), and 232 to 252 (AMAT…FVLL).

The protein belongs to the UPF0761 family.

The protein localises to the cell inner membrane. The polypeptide is UPF0761 membrane protein NT05HA_1801 (Aggregatibacter aphrophilus (strain NJ8700) (Haemophilus aphrophilus)).